The chain runs to 1323 residues: Inositol hexakisphosphate and diphosphoinositol-pentakisphosphate kinase (1323 aa).

Position 26–27 (26–27 (RK)) interacts with substrate. Residues arginine 109, lysine 162, histidine 169, arginine 188, 212 to 215 (EEFI), and 221 to 223 (DVK) contribute to the ATP site. 188–189 (RK) contacts substrate. Lysine 223 and arginine 237 together coordinate substrate. ATP-binding positions include aspartate 284 and 296–298 (DVN). Substrate is bound at residue 301 to 304 (SFVK). The polyphosphoinositide-binding domain stretch occupies residues 355–426 (TTPSGKLAEL…VLELARALVI (72 aa)). Polar residues-rich tracts occupy residues 933-947 (FNLS…SSRS) and 977-992 (VTPT…NDDL). 3 disordered regions span residues 933–1022 (FNLS…SEDD), 1043–1107 (AMAD…GGGK), and 1134–1155 (IVIP…ASER). A compositionally biased stretch (low complexity) spans 993 to 1006 (SISSNAESTAAEST). The segment covering 1062–1074 (KSMEEGDKPHGEW) has biased composition (basic and acidic residues). Low complexity predominate over residues 1090–1101 (SNEMESNNESME).

This sequence belongs to the histidine acid phosphatase family. VIP1 subfamily.

The protein resides in the cytoplasm. It is found in the cytosol. The enzyme catalyses 1D-myo-inositol hexakisphosphate + ATP = 1-diphospho-1D-myo-inositol 2,3,4,5,6-pentakisphosphate + ADP. It carries out the reaction 5-diphospho-1D-myo-inositol 1,2,3,4,6-pentakisphosphate + ATP + H(+) = 1,5-bis(diphospho)-1D-myo-inositol 2,3,4,6-tetrakisphosphate + ADP. Bifunctional inositol kinase that acts in concert with the IP6K kinases to synthesize the diphosphate group-containing inositol pyrophosphates diphosphoinositol pentakisphosphate, PP-InsP5, and bis-diphosphoinositol tetrakisphosphate, (PP)2-InsP4. PP-InsP5 and (PP)2-InsP4, also respectively called InsP7 and InsP8, may regulate a variety of cellular processes, including apoptosis, vesicle trafficking, cytoskeletal dynamics, and exocytosis. Phosphorylates inositol hexakisphosphate (InsP6) at position 1 to produce PP-InsP5 which is in turn phosphorylated by IP6Ks to produce (PP)2-InsP4. Alternatively, phosphorylates PP-InsP5 at position 1, produced by IP6Ks from InsP6, to produce (PP)2-InsP4. This Caenorhabditis elegans protein is Inositol hexakisphosphate and diphosphoinositol-pentakisphosphate kinase.